The chain runs to 67 residues: DNA-directed RNA polymerase subunit omega (67 aa).

Belongs to the RNA polymerase subunit omega family. As to quaternary structure, the RNAP catalytic core consists of 2 alpha, 1 beta, 1 beta' and 1 omega subunit. When a sigma factor is associated with the core the holoenzyme is formed, which can initiate transcription.

It carries out the reaction RNA(n) + a ribonucleoside 5'-triphosphate = RNA(n+1) + diphosphate. Promotes RNA polymerase assembly. Latches the N- and C-terminal regions of the beta' subunit thereby facilitating its interaction with the beta and alpha subunits. This Ralstonia nicotianae (strain ATCC BAA-1114 / GMI1000) (Ralstonia solanacearum) protein is DNA-directed RNA polymerase subunit omega.